We begin with the raw amino-acid sequence, 341 residues long: ATP-dependent 6-phosphofructokinase 2 (341 aa).

ATP is bound by residues G10, 72–73 (RL), and 102–105 (GEGT). Residue E103 participates in Mg(2+) binding. Substrate-binding positions include 125-127 (TID), R162, 169-171 (MGR), E222, K266, and 272-275 (HVQR). D127 acts as the Proton acceptor in catalysis.

Belongs to the phosphofructokinase type A (PFKA) family. Mixed-substrate PFK group III subfamily. Homodimer or homotetramer. Mg(2+) is required as a cofactor.

Its subcellular location is the cytoplasm. The enzyme catalyses beta-D-fructose 6-phosphate + ATP = beta-D-fructose 1,6-bisphosphate + ADP + H(+). It participates in carbohydrate degradation; glycolysis; D-glyceraldehyde 3-phosphate and glycerone phosphate from D-glucose: step 3/4. Allosterically inhibited by phosphoenolpyruvate. Its function is as follows. Catalyzes the phosphorylation of D-fructose 6-phosphate to fructose 1,6-bisphosphate by ATP, the first committing step of glycolysis. This chain is ATP-dependent 6-phosphofructokinase 2, found in Streptomyces coelicolor (strain ATCC BAA-471 / A3(2) / M145).